A 1438-amino-acid polypeptide reads, in one-letter code: Lysophospholipase NTE1 (1438 aa).

Topologically, residues 1 to 25 (MDSDTSSADFHSTETLVSTPKYSYG) are cytoplasmic. The helical transmembrane segment at 26–46 (VLINVILLVSWTCFRVVNWFL) threads the bilayer. The Lumenal portion of the chain corresponds to 47 to 64 (VTLPSILLGMLSKTFQIT). The helical transmembrane segment at 65-85 (LSLSSILMFVVAVTAICFLVV) threads the bilayer. The Cytoplasmic segment spans residues 86–1438 (RYKYLTRYSR…HVSLSRRNSI (1353 aa)). The segment covering 432–450 (YETQTIPNESEDSPTIQRS) has biased composition (polar residues). The interval 432–464 (YETQTIPNESEDSPTIQRSSLRRRASHSTSLRK) is disordered. A nucleoside 3',5'-cyclic phosphate-binding positions include 590–720 (GDDS…LTID) and 707–856 (RLKR…VANR). The PNPLA domain occupies 1131-1295 (LVLGGGGSRG…LDNLPVSEMK (165 aa)). Positions 1135-1140 (GGGSRG) match the GXGXXG motif. Residues 1162-1166 (GTSIG) carry the GXSXG motif. Residue serine 1164 is the Nucleophile of the active site. The Proton acceptor role is filled by aspartate 1282. Positions 1282–1284 (DGG) match the DGA/G motif.

Belongs to the NTE family.

The protein localises to the endoplasmic reticulum membrane. The enzyme catalyses a 1-acyl-sn-glycero-3-phosphocholine + H2O = sn-glycerol 3-phosphocholine + a fatty acid + H(+). Inhibited by organophosphorus esters. Functionally, intracellular phospholipase B that catalyzes the double deacylation of phosphatidylcholine (PC) to glycerophosphocholine (GroPCho). Plays an important role in membrane lipid homeostasis. Responsible for the rapid PC turnover in response to inositol, elevated temperatures, or when choline is present in the growth medium. The chain is Lysophospholipase NTE1 (NTE1) from Meyerozyma guilliermondii (strain ATCC 6260 / CBS 566 / DSM 6381 / JCM 1539 / NBRC 10279 / NRRL Y-324) (Yeast).